The primary structure comprises 503 residues: Lysine--tRNA ligase (503 aa).

2 residues coordinate Mg(2+): E414 and E421.

It belongs to the class-II aminoacyl-tRNA synthetase family. As to quaternary structure, homodimer. Mg(2+) serves as cofactor.

The protein resides in the cytoplasm. The enzyme catalyses tRNA(Lys) + L-lysine + ATP = L-lysyl-tRNA(Lys) + AMP + diphosphate. The protein is Lysine--tRNA ligase of Neisseria meningitidis serogroup A / serotype 4A (strain DSM 15465 / Z2491).